We begin with the raw amino-acid sequence, 312 residues long: Olfactory receptor 6Z7 (312 aa).

The Extracellular portion of the chain corresponds to 1–29 (MERSLALANMTRVQQFILLGLSTRLDIRD). The N-linked (GlcNAc...) asparagine glycan is linked to N9. A helical transmembrane segment spans residues 30–50 (ALFAVFLTLYLLTLLENTLII). Over 51-69 (YLICSHKELHKPMYFFLGN) the chain is Cytoplasmic. Residues 70 to 90 (LSCLEMCYVSVTMPTLLMGLW) form a helical membrane-spanning segment. N91 is a topological domain (extracellular). The helical transmembrane segment at 92–112 (GLYHIPFIACMTQLFFFIVLV) threads the bilayer. Residues C101 and C193 are joined by a disulfide bond. Topologically, residues 113–141 (GTECILLASMAYDRYVAICRPLHYPVLMR) are cytoplasmic. The chain crosses the membrane as a helical span at residues 142–162 (PQVCLGLAMISWLGGLLVSMI). The Extracellular portion of the chain corresponds to 163–195 (KTTCIATLSYCGPNVLNHFFCDVSPLLNLSCTH). N190 carries N-linked (GlcNAc...) asparagine glycosylation. Residues 196–216 (VALTELVDFISAIVILWGCFL) form a helical membrane-spanning segment. Residues 217-241 (TTMASYVAIGRAVLRMPSTTARYKA) lie on the Cytoplasmic side of the membrane. The helical transmembrane segment at 242–262 (FSTCASHLVVVGIFYSVTIFI) threads the bilayer. Residues 263–275 (YARPKRIEAMDLN) are Extracellular-facing. The helical transmembrane segment at 276-296 (KVLSVIYTVVTPMCNPVIYCL) threads the bilayer. Residues 297 to 312 (RNKEVQVALHRTMHWS) lie on the Cytoplasmic side of the membrane.

It belongs to the G-protein coupled receptor 1 family.

It localises to the cell membrane. Its function is as follows. Odorant receptor. The chain is Olfactory receptor 6Z7 from Mus musculus (Mouse).